The sequence spans 235 residues: Pyridoxine 5'-phosphate synthase (235 aa).

3-amino-2-oxopropyl phosphate is bound at residue Asn-6. 1-deoxy-D-xylulose 5-phosphate is bound at residue 8–9 (DH). Arg-17 contacts 3-amino-2-oxopropyl phosphate. The active-site Proton acceptor is His-42. The 1-deoxy-D-xylulose 5-phosphate site is built by Arg-44 and His-49. The active-site Proton acceptor is the Glu-69. Thr-99 contributes to the 1-deoxy-D-xylulose 5-phosphate binding site. Residue His-189 is the Proton donor of the active site. Residues Gly-190 and 211–212 (GH) contribute to the 3-amino-2-oxopropyl phosphate site.

The protein belongs to the PNP synthase family. In terms of assembly, homooctamer; tetramer of dimers.

The protein localises to the cytoplasm. It carries out the reaction 3-amino-2-oxopropyl phosphate + 1-deoxy-D-xylulose 5-phosphate = pyridoxine 5'-phosphate + phosphate + 2 H2O + H(+). It functions in the pathway cofactor biosynthesis; pyridoxine 5'-phosphate biosynthesis; pyridoxine 5'-phosphate from D-erythrose 4-phosphate: step 5/5. Its function is as follows. Catalyzes the complicated ring closure reaction between the two acyclic compounds 1-deoxy-D-xylulose-5-phosphate (DXP) and 3-amino-2-oxopropyl phosphate (1-amino-acetone-3-phosphate or AAP) to form pyridoxine 5'-phosphate (PNP) and inorganic phosphate. The protein is Pyridoxine 5'-phosphate synthase of Chlorobium luteolum (strain DSM 273 / BCRC 81028 / 2530) (Pelodictyon luteolum).